We begin with the raw amino-acid sequence, 307 residues long: Nucleotide-binding protein Arth_2083 (307 aa).

Gly30–Ser37 contacts ATP. Asp81–Ser84 contributes to the GTP binding site.

Belongs to the RapZ-like family.

Its function is as follows. Displays ATPase and GTPase activities. In Arthrobacter sp. (strain FB24), this protein is Nucleotide-binding protein Arth_2083.